A 425-amino-acid chain; its full sequence is Dihydroorotase (425 aa).

Zn(2+) contacts are provided by H56 and H58. Substrate-binding positions include H58–R60 and N90. Residues D148, H175, and H228 each contribute to the Zn(2+) site. N274 is a binding site for substrate. D301 serves as a coordination point for Zn(2+). The active site involves D301. Residues H305 and F319 to G320 contribute to the substrate site.

Belongs to the metallo-dependent hydrolases superfamily. DHOase family. Class I DHOase subfamily. Zn(2+) is required as a cofactor.

It carries out the reaction (S)-dihydroorotate + H2O = N-carbamoyl-L-aspartate + H(+). It participates in pyrimidine metabolism; UMP biosynthesis via de novo pathway; (S)-dihydroorotate from bicarbonate: step 3/3. Catalyzes the reversible cyclization of carbamoyl aspartate to dihydroorotate. The chain is Dihydroorotase from Lactobacillus acidophilus (strain ATCC 700396 / NCK56 / N2 / NCFM).